The following is a 357-amino-acid chain: Glutamine synthetase root isozyme 5 (357 aa).

Residues 19 to 99 (IIAEYIWVGG…VMCDCYTPQG (81 aa)) form the GS beta-grasp domain. The region spanning 106–357 (KRYKAATVFS…ADTTILWKGN (252 aa)) is the GS catalytic domain.

Belongs to the glutamine synthetase family. Homooctamer. In terms of tissue distribution, found mainly in the cortical tissues of seedling roots, stem and seedling shoot.

The protein localises to the cytoplasm. It catalyses the reaction L-glutamate + NH4(+) + ATP = L-glutamine + ADP + phosphate + H(+). Functionally, plays a role in the flow of nitrogen into nitrogenous organic compounds. The protein is Glutamine synthetase root isozyme 5 (GS1-5) of Zea mays (Maize).